A 337-amino-acid chain; its full sequence is G-protein coupled receptor 26 (337 aa).

Over Met1–Gly10 the chain is Extracellular. A helical membrane pass occupies residues Leu11 to Leu31. The Cytoplasmic portion of the chain corresponds to His32–Asn47. A helical transmembrane segment spans residues Leu48–Val68. The Extracellular portion of the chain corresponds to Ala69–Leu81. Cys79 and Cys156 are joined by a disulfide. A helical membrane pass occupies residues Ala82–Ile102. The Cytoplasmic portion of the chain corresponds to Asp103–Ala123. Residues Ala124 to Leu144 form a helical membrane-spanning segment. At Ser145 to Arg168 the chain is on the extracellular side. Residues Phe169–Cys189 traverse the membrane as a helical segment. At Phe190 to Thr245 the chain is on the cytoplasmic side. A helical transmembrane segment spans residues Phe246 to Phe266. Over Ser267 to Gly276 the chain is Extracellular. The helical transmembrane segment at Val277–Leu297 threads the bilayer. Over Arg298–Glu337 the chain is Cytoplasmic.

This sequence belongs to the G-protein coupled receptor 1 family. Detected in extracts of several brain regions including striatum, pons, cerebellum and cortex. Not detected in numerous peripheral tissue extracts, except in testis. In the brain, detected in cortical structures including the anterior cingulate area, posterior cingulate and the frontoparietal, somatosensory and piriform cortices. Prominent also in the olfactory tubercle, the islands of Calleja, ventromedial and posterior nuclei of the hypothalamus, the medial septal nucleus, nucleus of the diagonal band and the ventral tegmental area. Localized also to hippocampal structures, with signals strongest over the CA2 and CA3 regions of Ammon's horn and less so over the dentate gyrus. Expressed in the caudate putamen only in its most caudal portion, with a decreasing gradient of signal from the dorsal to ventral aspect. Strong expression associated with a single pontine structure, the inferior olivary nucleus.

Its subcellular location is the cell membrane. Its function is as follows. Orphan receptor. Displays a significant level of constitutive activity. Its effect is mediated by G(s)-alpha protein that stimulate adenylate cyclase, resulting in an elevation of intracellular cAMP. This Rattus norvegicus (Rat) protein is G-protein coupled receptor 26 (Gpr26).